Here is a 350-residue protein sequence, read N- to C-terminus: MPVLHNRISNDALKAKMLAESEPRTTISFYKYFHIADPKATRDALYQLFTALNVFGRVYLAHEGINAQISVPASNVKTFRAQLYAFDSALDGLRLNIALDDDGKSFWVLRMKVRDRIVADGIDDPHFDASNVGEYLQAAEVNAMLDDPDALFIDMRNHYEYEVGHFENALEIPADTFREQLPKAVEMMQAHKDKKIVMYCTGGIRCEKASAWMKHNGFNKVWHIEGGIIEYARKAREQGLPVRFIGKNFVFDERMGERISDEIIAHCHQCGAPCDSHTNCKNDGCHLLFIQCPVCAEKYKGCCSEICCEESALPPEEQRRRRAGRENGNKIFNKSRGRLNTTLGIPDPTE.

The Rhodanese domain maps to Asp146–Leu240. Residue Cys200 is the Cysteine persulfide intermediate of the active site.

It belongs to the TrhO family.

It carries out the reaction uridine(34) in tRNA + AH2 + O2 = 5-hydroxyuridine(34) in tRNA + A + H2O. Catalyzes oxygen-dependent 5-hydroxyuridine (ho5U) modification at position 34 in tRNAs, the first step in 5-carboxymethoxyuridine (cmo5U) biosynthesis. May be part of an alternate pathway, which is able to bypass cmo5U biogenesis in a subset of tRNAs under aerobic conditions. This Escherichia coli O157:H7 protein is tRNA uridine(34) hydroxylase.